Here is a 281-residue protein sequence, read N- to C-terminus: Pantothenate synthetase (281 aa).

An ATP-binding site is contributed by 30-37 (MGALHAGH). The active-site Proton donor is His37. Residue Gln64 coordinates (R)-pantoate. A beta-alanine-binding site is contributed by Gln64. 150-153 (GKKD) contacts ATP. Gln156 contributes to the (R)-pantoate binding site. Residues Val179 and 187–190 (YSSR) each bind ATP.

It belongs to the pantothenate synthetase family. Homodimer.

Its subcellular location is the cytoplasm. It catalyses the reaction (R)-pantoate + beta-alanine + ATP = (R)-pantothenate + AMP + diphosphate + H(+). It functions in the pathway cofactor biosynthesis; (R)-pantothenate biosynthesis; (R)-pantothenate from (R)-pantoate and beta-alanine: step 1/1. Functionally, catalyzes the condensation of pantoate with beta-alanine in an ATP-dependent reaction via a pantoyl-adenylate intermediate. This chain is Pantothenate synthetase, found in Akkermansia muciniphila (strain ATCC BAA-835 / DSM 22959 / JCM 33894 / BCRC 81048 / CCUG 64013 / CIP 107961 / Muc).